The following is an 876-amino-acid chain: Alanine--tRNA ligase (876 aa).

N6-acetyllysine is present on Lys74. Zn(2+) contacts are provided by His564, His568, Cys666, and His670.

It belongs to the class-II aminoacyl-tRNA synthetase family. In terms of assembly, homotetramer. Zn(2+) serves as cofactor.

The protein localises to the cytoplasm. The catalysed reaction is tRNA(Ala) + L-alanine + ATP = L-alanyl-tRNA(Ala) + AMP + diphosphate. Functionally, catalyzes the attachment of alanine to tRNA(Ala) in a two-step reaction: alanine is first activated by ATP to form Ala-AMP and then transferred to the acceptor end of tRNA(Ala). Also edits incorrectly charged Ser-tRNA(Ala) and Gly-tRNA(Ala) via its editing domain. The protein is Alanine--tRNA ligase of Shigella flexneri serotype 5b (strain 8401).